The following is a 594-amino-acid chain: DNA polymerase epsilon subunit B (594 aa).

It belongs to the DNA polymerase epsilon subunit B family. In terms of assembly, heterotetramer. Consists of four subunits: pol2, dpb2, dpb3 and dpb4. Interacts with dpb3.

The protein resides in the nucleus. In terms of biological role, as accessory component of the DNA polymerase epsilon (DNA polymerase II) participates in chromosomal DNA replication. In Schizosaccharomyces pombe (strain 972 / ATCC 24843) (Fission yeast), this protein is DNA polymerase epsilon subunit B (dpb2).